The following is a 393-amino-acid chain: RNA polymerase II holoenzyme cyclin-like subunit (393 aa).

The 96-residue stretch at 51–146 (ICKRLNLRQR…LLEEMEFDMV (96 aa)) folds into the Cyclin N-terminal domain.

Belongs to the cyclin family. Cyclin C subfamily. In terms of assembly, component of the SRB8-11 complex, a regulatory module of the Mediator complex.

The protein localises to the nucleus. Functionally, component of the SRB8-11 complex. The SRB8-11 complex is a regulatory module of the Mediator complex which is itself involved in regulation of basal and activated RNA polymerase II-dependent transcription. The SRB8-11 complex may be involved in the transcriptional repression of a subset of genes regulated by Mediator. It may inhibit the association of the Mediator complex with RNA polymerase II to form the holoenzyme complex. The SRB8-11 complex phosphorylates the C-terminal domain (CTD) of the largest subunit of RNA polymerase II. This is RNA polymerase II holoenzyme cyclin-like subunit (SSN8) from Mycosarcoma maydis (Corn smut fungus).